The following is a 32-amino-acid chain: GGSIPCIETCVWTGCFLVPGCSCKSDKKCYLN.

The segment at residues 1-32 (GGSIPCIETCVWTGCFLVPGCSCKSDKKCYLN) is a cross-link (cyclopeptide (Gly-Asn)). Intrachain disulfides connect Cys6-Cys21, Cys10-Cys23, and Cys15-Cys29.

In terms of processing, this is a cyclic peptide.

In terms of biological role, probably participates in a plant defense mechanism. This is Cyclotide glopa A from Gloeospermum pauciflorum.